The chain runs to 139 residues: Ribulose bisphosphate carboxylase small subunit (139 aa).

The protein belongs to the RuBisCO small chain family. As to quaternary structure, heterohexadecamer of 8 large and 8 small subunits.

The protein localises to the plastid. Its subcellular location is the chloroplast. Its function is as follows. RuBisCO catalyzes two reactions: the carboxylation of D-ribulose 1,5-bisphosphate, the primary event in carbon dioxide fixation, as well as the oxidative fragmentation of the pentose substrate in the photorespiration process. Both reactions occur simultaneously and in competition at the same active site. Although the small subunit is not catalytic it is essential for maximal activity. The chain is Ribulose bisphosphate carboxylase small subunit from Cylindrotheca sp. (strain N1) (Marine diatom).